The sequence spans 453 residues: Ethanolamine ammonia-lyase large subunit (453 aa).

Substrate-binding positions include R160 to Q162 and N193. Adenosylcob(III)alamin is bound by residues P194 and Q246. E287 lines the substrate pocket. S295 contributes to the adenosylcob(III)alamin binding site. D362 provides a ligand contact to substrate. Position 401 (M401) interacts with adenosylcob(III)alamin.

It belongs to the EutB family. As to quaternary structure, the basic unit is a heterodimer which dimerizes to form tetramers. The heterotetramers trimerize; 6 large subunits form a core ring with 6 small subunits projecting outwards. The cofactor is adenosylcob(III)alamin.

The protein resides in the bacterial microcompartment. It carries out the reaction ethanolamine = acetaldehyde + NH4(+). The protein operates within amine and polyamine degradation; ethanolamine degradation. Catalyzes the deamination of various vicinal amino-alcohols to oxo compounds. Allows this organism to utilize ethanolamine as the sole source of nitrogen and carbon in the presence of vitamin B12. The sequence is that of Ethanolamine ammonia-lyase large subunit from Escherichia coli O157:H7.